The primary structure comprises 391 residues: DNA-directed RNA polymerase subunit Rpo1C (391 aa).

The protein belongs to the RNA polymerase beta' chain family. In terms of assembly, part of the RNA polymerase complex.

It localises to the cytoplasm. It carries out the reaction RNA(n) + a ribonucleoside 5'-triphosphate = RNA(n+1) + diphosphate. DNA-dependent RNA polymerase (RNAP) catalyzes the transcription of DNA into RNA using the four ribonucleoside triphosphates as substrates. Forms part of the jaw domain. This Thermococcus gammatolerans (strain DSM 15229 / JCM 11827 / EJ3) protein is DNA-directed RNA polymerase subunit Rpo1C.